Here is a 300-residue protein sequence, read N- to C-terminus: Ribosomal RNA small subunit methyltransferase H (300 aa).

Residues 33-35 (AGH), Asp-52, Phe-86, Asp-97, and Gln-104 each bind S-adenosyl-L-methionine.

It belongs to the methyltransferase superfamily. RsmH family.

Its subcellular location is the cytoplasm. The catalysed reaction is cytidine(1402) in 16S rRNA + S-adenosyl-L-methionine = N(4)-methylcytidine(1402) in 16S rRNA + S-adenosyl-L-homocysteine + H(+). Functionally, specifically methylates the N4 position of cytidine in position 1402 (C1402) of 16S rRNA. The sequence is that of Ribosomal RNA small subunit methyltransferase H from Aliarcobacter butzleri (strain RM4018) (Arcobacter butzleri).